The chain runs to 20 residues: 26 kDa protein (20 aa).

The sequence is that of 26 kDa protein from Bacillus cereus.